The following is a 3323-amino-acid chain: Mucin-3A (3323 aa).

Positions 1 to 15 (MQLLGLLGLLWMLKA) are cleaved as a signal peptide. 15 disordered regions span residues 218 to 243 (TISS…TSPT), 270 to 289 (TSMT…SSPT), 325 to 345 (ISRS…STVT), 359 to 380 (GTLS…TETA), 539 to 677 (MSAS…PSTE), 700 to 722 (NASS…GTNS), 734 to 756 (ETSS…KTAK), 909 to 991 (SFSS…TLTP), 1170 to 1201 (ISSA…TTPT), 1318 to 1356 (AESA…FPSS), 1380 to 1442 (AMTS…TNPV), 1484 to 1509 (TMTE…ETAK), 1714 to 1746 (TPSS…TPTS), 1793 to 1844 (FTSS…YPTS), and 1900 to 2056 (TSHS…SHST). Residues 270–284 (TSMTTTASQPTATNT) are compositionally biased toward low complexity. The segment covering 545–563 (GTTHTESISSPPASTSTLH) has biased composition (polar residues). The segment covering 564 to 618 (TTAESTLAPTTTTSFTTSTTMEPPSTTAATTGTGQTTFTSSTATFPETTTPTPTT) has biased composition (low complexity). A compositionally biased stretch (polar residues) spans 619-629 (DMSTESLTTAM). Over residues 630–676 (TSPPITSSVTSTNTVTSMTTTTSPPTTTNSFTSLTSMPLSSTPVPST) the composition is skewed to low complexity. Positions 700-721 (NASSMTTSETTYPNSPTGPGTN) are enriched in polar residues. A compositionally biased stretch (low complexity) spans 909 to 918 (SFSSSMSESS). The span at 919-932 (AGTTHTESISSPRG) shows a compositional bias: polar residues. The span at 933–991 (TTSTLHTTVESTPSPTTTTSFTTSTMMEPPSSTVSTTGRGQTTFPSSTATFPETTTLTP) shows a compositional bias: low complexity. Positions 1324-1356 (PTTTTSFTTSPTMEPPSTTVATTGTGQTTFPSS) are enriched in low complexity. 32 tandem repeats follow at residues 1893–1910 (VTTT…FTSS), 1911–1927 (IATT…FTSS), 1928–1944 (ITTT…FTSS), 1945–1961 (ITNT…FTSS), 1962–1978 (ITTT…LTSS), 1979–1995 (ITTT…YTSL), 1996–2012 (ITTT…FTSS), 2013–2029 (ITTT…LTSS), 2030–2046 (ITTT…FTSS), 2047–2062 (ITTE…FTSL), 2063–2079 (ITIT…YTTS), 2080–2096 (ITTT…FTSS), 2097–2113 (ITTT…FTSS), 2114–2130 (ITTS…FTSS), 2131–2147 (ITTT…FTSS), 2148–2164 (ITTT…FTSL), 2165–2191 (ITTT…FTSS), 2192–2208 (NTIT…YITS), 2209–2225 (ITTT…FSSS), 2226–2242 (ITTT…FTSS), 2243–2259 (ITTT…FTSS), 2260–2276 (ITTT…FTSS), 2277–2293 (ITTS…STSL), 2294–2310 (ITTT…FTSS), 2311–2327 (ITTT…FTSS), 2328–2344 (ITTT…FTSS), 2345–2361 (ITTT…FTSS), 2362–2378 (ITTT…FSSS), 2379–2395 (ITTT…LTSW), 2396–2412 (VTTT…LTSS), 2413–2429 (ITTT…FTSS), and 2430–2446 (ITTT…LSSS). Positions 1893–2446 (VTTTTKITSH…SESTPSLSSS (554 aa)) are 32 X approximate tandem repeats, Ser/Thr-rich. A compositionally biased stretch (polar residues) spans 1907-1947 (FTSSIATTETPSHSTPRFTSSITTTETPSHSTPRFTSSITN). A compositionally biased stretch (low complexity) spans 1948 to 2056 (TKTTSHSSPS…ITTETTSHST (109 aa)). 4 stretches are compositionally biased toward low complexity: residues 2100-2170 (TETT…TTET), 2177-2384 (TTET…TTET), 2393-2447 (TSWV…SSST), and 2464-2507 (TTSE…TTTT). Disordered stretches follow at residues 2100 to 2447 (TETT…SSST), 2464 to 2508 (TTSE…TTTD), 2578 to 2608 (TQTP…DSST), 2631 to 2656 (IPST…TSTS), 2834 to 2858 (MMPE…VPTN), and 2897 to 2937 (SSLP…TSRR). Residues 2578 to 2602 (TQTPPVLTSATGTQTSPAPTTVTFG) are compositionally biased toward polar residues. 3 stretches are compositionally biased toward low complexity: residues 2633–2656 (STHS…TSTS), 2834–2849 (MMPE…ASSS), and 2905–2937 (TSSK…TSRR). The 34-residue stretch at 2976–3009 (SGDRCQLQTRCQNGGQWDGLKCQCPSTFYGSSCE) folds into the EGF-like domain. Intrachain disulfides connect Cys2980/Cys2986 and Cys2999/Cys3008. Residues 3018–3143 (DVVETEVGME…DSIKVNNNSK (126 aa)) form the SEA domain. The helical transmembrane segment at 3227–3247 (LVGGLTAGAALLVLLLLALGV) threads the bilayer.

Highly O-glycosylated and probably also N-glycosylated. In terms of tissue distribution, broad specificity; small intestine, colon, colonic tumors, heart, liver, thymus, prostate, pancreas and gall bladder.

The protein resides in the membrane. It is found in the secreted. In terms of biological role, major glycoprotein component of a variety of mucus gels. Thought to provide a protective, lubricating barrier against particles and infectious agents at mucosal surfaces. May be involved in ligand binding and intracellular signaling. The protein is Mucin-3A of Homo sapiens (Human).